The chain runs to 1032 residues: Integrin alpha-4 (1032 aa).

Residues 1-34 (MIRDLGKVGKVSLLLDHIWTGILLYTVILTPADC) form the signal peptide. Residues 35 to 974 (YNIDESSPML…LHNLKPKKHV (940 aa)) are Extracellular-facing. 7 FG-GAP repeats span residues 36–100 (NIDE…PNRT), 113–177 (KCGK…TELS), 186–237 (DHVR…TIKS), 238–291 (YVDL…EKQL), 292–351 (TILF…GAME), 353–411 (LKFE…GITP), and 415–477 (QRLQ…LPST). N-linked (GlcNAc...) asparagine glycosylation is found at asparagine 81 and asparagine 98. Disulfide bonds link cysteine 91–cysteine 101, cysteine 144–cysteine 165, and cysteine 183–cysteine 198. The N-linked (GlcNAc...) asparagine glycan is linked to asparagine 229. Ca(2+)-binding residues include aspartate 314, asparagine 316, aspartate 318, leucine 320, aspartate 322, aspartate 376, aspartate 378, aspartate 380, aspartate 384, aspartate 438, aspartate 440, asparagine 442, tyrosine 444, and aspartate 446. The N-linked (GlcNAc...) asparagine glycan is linked to asparagine 479. A disulfide bond links cysteine 485 and cysteine 494. Residues asparagine 496, asparagine 517, asparagine 537, asparagine 626, and asparagine 660 are each glycosylated (N-linked (GlcNAc...) asparagine). 2 disulfide bridges follow: cysteine 500–cysteine 556 and cysteine 622–cysteine 627. Cysteine 698 and cysteine 712 are disulfide-bonded. N-linked (GlcNAc...) asparagine glycosylation is found at asparagine 746 and asparagine 857. Disulfide bonds link cysteine 853/cysteine 889 and cysteine 896/cysteine 901. A helical membrane pass occupies residues 975–998 (IYMIIGISLLLGILLFSLLTYILW). The Cytoplasmic segment spans residues 999-1032 (KVGFFRRKYQPIGTEETSRRESWNYLNKDEKEVK). A GFFKR motif motif is present at residues 1001–1005 (GFFRR).

The protein belongs to the integrin alpha chain family. Heterodimer of an alpha and a beta subunit.

The protein localises to the membrane. Functionally, fibronectin and V-CAM adhesion receptor. The polypeptide is Integrin alpha-4 (itga4) (Xenopus laevis (African clawed frog)).